The chain runs to 422 residues: Tryptophan synthase beta chain (422 aa).

Lys87 is modified (N6-(pyridoxal phosphate)lysine).

This sequence belongs to the TrpB family. As to quaternary structure, tetramer of two alpha and two beta chains. Pyridoxal 5'-phosphate is required as a cofactor.

It carries out the reaction (1S,2R)-1-C-(indol-3-yl)glycerol 3-phosphate + L-serine = D-glyceraldehyde 3-phosphate + L-tryptophan + H2O. Its pathway is amino-acid biosynthesis; L-tryptophan biosynthesis; L-tryptophan from chorismate: step 5/5. Functionally, the beta subunit is responsible for the synthesis of L-tryptophan from indole and L-serine. The sequence is that of Tryptophan synthase beta chain (trpB) from Haloferax volcanii (strain ATCC 29605 / DSM 3757 / JCM 8879 / NBRC 14742 / NCIMB 2012 / VKM B-1768 / DS2) (Halobacterium volcanii).